The sequence spans 512 residues: Bifunctional pantoate ligase/cytidylate kinase (512 aa).

Residues 1–276 (MKLQTSADLQ…CGEARLIDHR (276 aa)) are pantoate--beta-alanine ligase. Residue 27–34 (MGALHQGH) participates in ATP binding. The Proton donor role is filled by histidine 34. Glutamine 58 contacts (R)-pantoate. Position 58 (glutamine 58) interacts with beta-alanine. ATP is bound at residue 147–150 (GEKD). Position 153 (glutamine 153) interacts with (R)-pantoate. ATP-binding positions include leucine 176 and 184-187 (LSSR). Residues 277–512 (VLMSRLPILA…VPVEALNADA (236 aa)) form a cytidylate kinase region.

The protein in the N-terminal section; belongs to the pantothenate synthetase family. In the C-terminal section; belongs to the cytidylate kinase family. Type 1 subfamily.

The protein resides in the cytoplasm. It carries out the reaction (R)-pantoate + beta-alanine + ATP = (R)-pantothenate + AMP + diphosphate + H(+). The catalysed reaction is CMP + ATP = CDP + ADP. It catalyses the reaction dCMP + ATP = dCDP + ADP. Its pathway is cofactor biosynthesis; (R)-pantothenate biosynthesis; (R)-pantothenate from (R)-pantoate and beta-alanine: step 1/1. Its function is as follows. Catalyzes the condensation of pantoate with beta-alanine in an ATP-dependent reaction via a pantoyl-adenylate intermediate. In terms of biological role, catalyzes the transfer of a phosphate group from ATP to either CMP or dCMP to form CDP or dCDP and ADP, respectively. The chain is Bifunctional pantoate ligase/cytidylate kinase from Synechococcus sp. (strain RCC307).